A 482-amino-acid chain; its full sequence is C3a anaphylatoxin chemotactic receptor (482 aa).

Residues 1-23 are Extracellular-facing; sequence MASFSAETNSTDLLSQPWNEPPV. Asparagine 9 carries N-linked (GlcNAc...) asparagine glycosylation. A helical membrane pass occupies residues 24-46; that stretch reads ILSMVILSLTFLLGLPGNGLVLW. At 47–57 the chain is on the cytoplasmic side; sequence VAGLKMQRTVN. A helical transmembrane segment spans residues 58-80; it reads TVWFLHLTLADLLCCLSLPFSLA. Residues 81-96 are Extracellular-facing; it reads HLALQGQWPYGRFLCE. Residues cysteine 95 and cysteine 172 are joined by a disulfide bond. Residues 97–118 form a helical membrane-spanning segment; the sequence is LIPSIIVLNMFASVFLLTAISL. The Cytoplasmic segment spans residues 119-139; that stretch reads DRCLVVFKPIWCQNHRNVGTA. A helical transmembrane segment spans residues 140–160; the sequence is CSICGCIWVVAFVMCIPVFVY. Residues 161–340 are Extracellular-facing; that stretch reads REIFTADNHN…TPLVAITITR (180 aa). Sulfotyrosine is present on residues tyrosine 174 and tyrosine 184. N-linked (GlcNAc...) asparagine glycosylation is present at asparagine 194. Tyrosine 318 bears the Sulfotyrosine mark. A helical membrane pass occupies residues 341-360; the sequence is LVVGFLLPSVIMIACYSFIV. Topologically, residues 361–377 are cytoplasmic; that stretch reads FRMQRGRFAKSQSKTFR. The chain crosses the membrane as a helical span at residues 378–400; the sequence is VAVVVVAVFLVCWTPYHIFGVLS. Residues 401 to 417 are Extracellular-facing; that stretch reads LLIDPESPLGKTLMSWD. Residues 418–438 traverse the membrane as a helical segment; sequence HVSIALASANSCFNPFLYALL. Residues 439–482 lie on the Cytoplasmic side of the membrane; that stretch reads GKDFRKKARQSIQGILEAAFSEELTRSTHCNSNNVFSERNSTTV. Phosphoserine is present on serine 459. At threonine 463 the chain carries Phosphothreonine.

This sequence belongs to the G-protein coupled receptor 1 family. Interacts with VGF-derived peptide TLQP-21. Among the sulfation sites Tyr-174 is essential for binding of C3a anaphylatoxin.

The protein resides in the cell membrane. Receptor for the chemotactic and inflammatory peptide anaphylatoxin C3a. This receptor stimulates chemotaxis, granule enzyme release and superoxide anion production. In Pongo abelii (Sumatran orangutan), this protein is C3a anaphylatoxin chemotactic receptor (C3AR1).